Consider the following 439-residue polypeptide: GTPase Der (439 aa).

2 consecutive EngA-type G domains span residues 2–167 (PTVL…ESKG) and 182–358 (IRVS…KSLH). Residues 8–15 (GKSNVGKS), 55–59 (DTGGI), 118–121 (NKSE), 188–195 (GRPNAGKS), 235–239 (DTAGL), and 301–304 (NKID) contribute to the GTP site. The 81-residue stretch at 359-439 (YRVQTSAVNS…PIFLKFKSRH (81 aa)) folds into the KH-like domain.

This sequence belongs to the TRAFAC class TrmE-Era-EngA-EngB-Septin-like GTPase superfamily. EngA (Der) GTPase family. Associates with the 50S ribosomal subunit.

GTPase that plays an essential role in the late steps of ribosome biogenesis. The sequence is that of GTPase Der from Thermosipho africanus (strain TCF52B).